We begin with the raw amino-acid sequence, 329 residues long: Cytosolic arginine sensor for mTORC1 subunit 1 (329 aa).

Phosphoserine; by PKB/AKT1 is present on Ser14. ACT domains follow at residues 72–138 and 260–321; these read AEAT…HTLA and GELW…EVLQ. Residues 111–112, Gly274, 280–281, and 300–304 contribute to the L-arginine site; these read SV, IV, and TFNFD.

It belongs to the GATS family. In terms of assembly, forms homodimers and heterodimers with CASTOR2. Interacts with the GATOR2 complex which is composed of MIOS, SEC13, SEH1L, WDR24 and WDR59; the interaction is negatively regulated by arginine. Interacts with TM4SF5; the interaction is positively regulated by leucine and is negatively regulated by arginine. Phosphorylation at Ser-14 by AKT1, promoting the interaction between CASTOR1 and RNF167. In terms of processing, ubiquitinated by RNF167 via 'Lys-29'-polyubiquitination, leading to its degradation, releasing the GATOR2 complex. Ubiquitination by RNF167 is promoted by phosphorylation at Ser-14 by AKT1. In terms of tissue distribution, widely expressed.

Its subcellular location is the cytoplasm. It localises to the cytosol. In terms of biological role, functions as an intracellular arginine sensor within the amino acid-sensing branch of the TORC1 signaling pathway. As a homodimer or a heterodimer with CASTOR2, binds and inhibits the GATOR subcomplex GATOR2 and thereby mTORC1. Binding of arginine to CASTOR1 allosterically disrupts the interaction of CASTOR1-containing dimers with GATOR2 which can in turn activate mTORC1 and the TORC1 signaling pathway. This Homo sapiens (Human) protein is Cytosolic arginine sensor for mTORC1 subunit 1.